The primary structure comprises 206 residues: Thymidylate kinase (206 aa).

Residue 7–14 coordinates ATP; it reads GGEGVGKT.

The protein belongs to the thymidylate kinase family.

It catalyses the reaction dTMP + ATP = dTDP + ADP. Functionally, phosphorylation of dTMP to form dTDP in both de novo and salvage pathways of dTTP synthesis. The protein is Thymidylate kinase of Synechococcus sp. (strain JA-2-3B'a(2-13)) (Cyanobacteria bacterium Yellowstone B-Prime).